A 158-amino-acid chain; its full sequence is GAF domain-containing protein A (158 aa).

A GAF domain is found at 32–158; sequence NQIANLANVT…LTQILKLLDN (127 aa).

The protein belongs to the free Met sulfoxide reductase family.

The polypeptide is GAF domain-containing protein A (gafA) (Dictyostelium discoideum (Social amoeba)).